We begin with the raw amino-acid sequence, 62 residues long: Short neurotoxin 3 (62 aa).

Intrachain disulfides connect cysteine 3–cysteine 24, cysteine 17–cysteine 41, cysteine 43–cysteine 54, and cysteine 55–cysteine 60.

Belongs to the three-finger toxin family. Short-chain subfamily. Type I alpha-neurotoxin sub-subfamily. Expressed by the venom gland.

Its subcellular location is the secreted. Binds to muscle nicotinic acetylcholine receptor (nAChR) and inhibit acetylcholine from binding to the receptor, thereby impairing neuromuscular transmission. The polypeptide is Short neurotoxin 3 (Naja mossambica (Mozambique spitting cobra)).